A 943-amino-acid polypeptide reads, in one-letter code: Translation initiation factor IF-2 (943 aa).

Residues 29–349 (LSVKSHSSSV…NNRGNSAPKL (321 aa)) form a disordered region. 5 stretches are compositionally biased toward basic and acidic residues: residues 69–82 (PKEE…DKAS), 112–137 (FKAE…DNRN), 145–155 (QGKRHNNDRRN), 163–196 (DHNK…RDNA), and 224–253 (RQSE…EKQQ). A compositionally biased stretch (low complexity) spans 254–266 (AEVAVQKAAAETK). The segment covering 296-309 (KSRDNHRVNEDGPK) has biased composition (basic and acidic residues). Low complexity predominate over residues 313–332 (NNKWNNQNQVRNQRNSNWNK). The tr-type G domain occupies 445–614 (ERAPVVTIMG…LLVAEVEELK (170 aa)). Positions 454–461 (GHVDHGKT) are G1. 454–461 (GHVDHGKT) contributes to the GTP binding site. Positions 479-483 (GITQH) are G2. Residues 500–503 (DTPG) form a G3 region. Residues 500 to 504 (DTPGH) and 554 to 557 (NKID) each bind GTP. A G4 region spans residues 554-557 (NKID). Residues 590–592 (SAK) form a G5 region.

Belongs to the TRAFAC class translation factor GTPase superfamily. Classic translation factor GTPase family. IF-2 subfamily.

It is found in the cytoplasm. Functionally, one of the essential components for the initiation of protein synthesis. Protects formylmethionyl-tRNA from spontaneous hydrolysis and promotes its binding to the 30S ribosomal subunits. Also involved in the hydrolysis of GTP during the formation of the 70S ribosomal complex. The protein is Translation initiation factor IF-2 of Streptococcus thermophilus (strain ATCC BAA-491 / LMD-9).